The primary structure comprises 298 residues: Heat stress transcription factor C-2a (298 aa).

Residues 105-128 (SSGGGGAKRKEEAGGCGGGGEAAA) are disordered. The segment at 145-181 (LRREQREIEGRVAAMWRRVQETERRPKQMLAFLVKVV) is hydrophobic repeat HR-A/B. A Nuclear localization signal motif is present at residues 213–216 (KRPR).

It belongs to the HSF family. Class C subfamily. In terms of assembly, homotrimer. Post-translationally, exhibits temperature-dependent phosphorylation.

It is found in the nucleus. Transcriptional regulator that specifically binds DNA of heat shock promoter elements (HSE). This chain is Heat stress transcription factor C-2a (HSFC2A), found in Oryza sativa subsp. japonica (Rice).